Here is a 680-residue protein sequence, read N- to C-terminus: DNA-directed RNA polymerase subunit beta' (680 aa).

Zn(2+) contacts are provided by Cys69, Cys71, Cys87, and Cys90. Mg(2+) is bound by residues Asp489, Asp491, and Asp493.

This sequence belongs to the RNA polymerase beta' chain family. RpoC1 subfamily. In plastids the minimal PEP RNA polymerase catalytic core is composed of four subunits: alpha, beta, beta', and beta''. When a (nuclear-encoded) sigma factor is associated with the core the holoenzyme is formed, which can initiate transcription. Mg(2+) serves as cofactor. Requires Zn(2+) as cofactor.

The protein resides in the plastid. It localises to the chloroplast. The enzyme catalyses RNA(n) + a ribonucleoside 5'-triphosphate = RNA(n+1) + diphosphate. Functionally, DNA-dependent RNA polymerase catalyzes the transcription of DNA into RNA using the four ribonucleoside triphosphates as substrates. The sequence is that of DNA-directed RNA polymerase subunit beta' from Citrus sinensis (Sweet orange).